Here is a 428-residue protein sequence, read N- to C-terminus: Peptidase B (428 aa).

Mn(2+) contacts are provided by K195 and D200. K207 is an active-site residue. Mn(2+)-binding residues include D218, D277, and E279. The active site involves R281.

Belongs to the peptidase M17 family. Homohexamer. It depends on Mn(2+) as a cofactor.

It localises to the cytoplasm. It catalyses the reaction Release of an N-terminal amino acid, Xaa, from a peptide or arylamide. Xaa is preferably Glu or Asp but may be other amino acids, including Leu, Met, His, Cys and Gln.. Its function is as follows. Probably plays an important role in intracellular peptide degradation. In Klebsiella pneumoniae (strain 342), this protein is Peptidase B.